The following is a 251-amino-acid chain: Acidic leucine-rich nuclear phosphoprotein 32 family member B (251 aa).

LRR repeat units follow at residues Pro-16–Glu-40, Asn-43–Pro-64, and Lys-65–Ala-84. Lys-86 carries the N6-acetyllysine modification. The LRR 4 repeat unit spans residues Asn-89–Lys-110. The LRRCT domain occupies Cys-123–Glu-161. The segment covering Asp-149–Glu-233 has biased composition (acidic residues). Residues Asp-149–Asp-251 form a disordered region. Ser-158 is modified (phosphoserine). A compositionally biased stretch (basic and acidic residues) spans Gly-234–Thr-244. The short motif at Lys-239 to Arg-242 is the Nuclear localization signal element. Position 244 is a phosphothreonine (Thr-244).

It belongs to the ANP32 family. In terms of assembly, interacts with histones H3 and H4. Interacts with KLF5; this interaction induces promoter region-specific histone incorporation and inhibition of histone acetylation by ANP32B. As to quaternary structure, (Microbial infection) Interacts with Sendai virus protein M. (Microbial infection) Interacts with Measles virus protein M. In terms of assembly, (Microbial infection) Interacts with Hendra virus protein M; this interaction promotes nuclear localization of M. As to quaternary structure, (Microbial infection) Interacts with influenza virus B protein PB2; this interaction strongly supports influenza B virus replication. Some glutamate residues are glycylated by TTLL8. This modification occurs exclusively on glutamate residues and results in a glycine chain on the gamma-carboxyl group. Post-translationally, directly cleaved by caspase-3/CASP3. In terms of tissue distribution, expressed in heart, lung, pancreas, prostate and in spleen, thymus and placenta.

It is found in the nucleus. The protein localises to the cytoplasm. In terms of biological role, multifunctional protein that is involved in the regulation of many processes including cell proliferation, apoptosis, cell cycle progression or transcription. Regulates the proliferation of neuronal stem cells, differentiation of leukemic cells and progression from G1 to S phase of the cell cycle. As negative regulator of caspase-3-dependent apoptosis, may act as an antagonist of ANP32A in regulating tissue homeostasis. Exhibits histone chaperone properties, able to recruit histones to certain promoters, thus regulating the transcription of specific genes. Also plays an essential role in the nucleocytoplasmic transport of specific mRNAs via the uncommon nuclear mRNA export receptor XPO1/CRM1. Participates in the regulation of adequate adaptive immune responses by acting on mRNA expression and cell proliferation. (Microbial infection) Plays an essential role in influenza A and B viral genome replication. Also plays a role in foamy virus mRNA export from the nucleus to the cytoplasm. In Homo sapiens (Human), this protein is Acidic leucine-rich nuclear phosphoprotein 32 family member B (ANP32B).